The following is a 520-amino-acid chain: Peptide chain release factor 3 (520 aa).

The tr-type G domain maps to 8–277 (ESRKTFAIIS…FAPMPNARQT (270 aa)). GTP contacts are provided by residues 17–24 (SHPDAGKT), 85–89 (DTPGH), and 139–142 (NKLD).

It belongs to the TRAFAC class translation factor GTPase superfamily. Classic translation factor GTPase family. PrfC subfamily.

The protein resides in the cytoplasm. In terms of biological role, increases the formation of ribosomal termination complexes and stimulates activities of RF-1 and RF-2. It binds guanine nucleotides and has strong preference for UGA stop codons. It may interact directly with the ribosome. The stimulation of RF-1 and RF-2 is significantly reduced by GTP and GDP, but not by GMP. The protein is Peptide chain release factor 3 of Staphylococcus aureus (strain MRSA252).